The chain runs to 439 residues: C4-dicarboxylate transport protein 1 (439 aa).

6 helical membrane-spanning segments follow: residues 18-38 (VLYIQVLVAIVLGVIVGWLWP), 56-76 (LIKMVIAPVIFCTVVSGIAHV), 91-111 (IYFEIVSTFALALGLIVANVI), 157-177 (GEILQVLLFSILFGIALMSLG), 193-213 (AIFGVIAIVVKAAPIGAFGAM), and 231-251 (LIATFYLTALAFVIIVLGIIA).

It belongs to the dicarboxylate/amino acid:cation symporter (DAACS) (TC 2.A.23) family.

It localises to the cell inner membrane. Functionally, responsible for the transport of dicarboxylates such as succinate, fumarate, and malate from the periplasm across the membrane. This chain is C4-dicarboxylate transport protein 1, found in Bradyrhizobium sp. (strain ORS 278).